Consider the following 832-residue polypeptide: Protein P (832 aa).

The terminal protein domain (TP) stretch occupies residues 1 to 177; sequence MPLSCPHFRK…FCGSPYSWEQ (177 aa). The interval 178–335 is spacer; sequence ELQHGAEPVC…YCLSHLVNLL (158 aa). Residues 208–224 show a composition bias toward low complexity; the sequence is KQSRLGLQSQQRQLARS. The tract at residues 208-241 is disordered; it reads KQSRLGLQSQQRQLARSHQGRSGSIRARVHSTTR. Positions 336–679 are polymerase/reverse transcriptase domain (RT); it reads EDWGPCTEHG…YLTLYPVARQ (344 aa). The region spanning 346–589 is the Reverse transcriptase domain; it reads EHHIRIPRTP…YSLNFMGYII (244 aa). Residues Asp418, Asp540, and Asp541 each coordinate Mg(2+).

Belongs to the hepadnaviridae P protein family.

The catalysed reaction is DNA(n) + a 2'-deoxyribonucleoside 5'-triphosphate = DNA(n+1) + diphosphate. It carries out the reaction Endonucleolytic cleavage to 5'-phosphomonoester.. Its activity is regulated as follows. Activated by host HSP70 and HSP40 in vitro to be able to bind the epsilon loop of the pgRNA. Because deletion of the RNase H region renders the protein partly chaperone-independent, the chaperones may be needed indirectly to relieve occlusion of the RNA-binding site by this domain. Inhibited by several reverse-transcriptase inhibitors: Lamivudine, Adefovir and Entecavir. In terms of biological role, multifunctional enzyme that converts the viral RNA genome into dsDNA in viral cytoplasmic capsids. This enzyme displays a DNA polymerase activity that can copy either DNA or RNA templates, and a ribonuclease H (RNase H) activity that cleaves the RNA strand of RNA-DNA heteroduplexes in a partially processive 3'- to 5'-endonucleasic mode. Neo-synthesized pregenomic RNA (pgRNA) are encapsidated together with the P protein, and reverse-transcribed inside the nucleocapsid. Initiation of reverse-transcription occurs first by binding the epsilon loop on the pgRNA genome, and is initiated by protein priming, thereby the 5'-end of (-)DNA is covalently linked to P protein. Partial (+)DNA is synthesized from the (-)DNA template and generates the relaxed circular DNA (RC-DNA) genome. After budding and infection, the RC-DNA migrates in the nucleus, and is converted into a plasmid-like covalently closed circular DNA (cccDNA). The activity of P protein does not seem to be necessary for cccDNA generation, and is presumably released from (+)DNA by host nuclear DNA repair machinery. The polypeptide is Protein P (Gibbon hepatitis B virus subtype ayw3q (isolate Hope) (HBVgbn)).